Reading from the N-terminus, the 425-residue chain is Polycomb protein esc (425 aa).

Residues 1–10 (MSSDKVKNGN) are compositionally biased toward basic and acidic residues. Residues 1-64 (MSSDKVKNGN…KPKSRAAYKY (64 aa)) are disordered. Positions 11–20 (EPEESEESCG) are enriched in acidic residues. The residue at position 15 (Ser-15) is a Phosphoserine. The segment covering 21-42 (DESASYTTNSTTSRSKSPSSST) has biased composition (low complexity). Residues 43–60 (RSKRRGRRSTKSKPKSRA) show a composition bias toward basic residues. 7 WD repeats span residues 71-114 (NHGA…GMQL), 126-165 (VFYT…AVGN), 168-208 (GHGQ…CIAI), 214-253 (GHRD…FHHK), 284-321 (IHRN…QSFE), 340-379 (ECEI…PEGA), and 388-424 (RSVA…QTTS).

The protein belongs to the WD repeat ESC family. In terms of assembly, component of the polycomb repressive complex 2 (PRC2, also known as the Esc/E(Z) complex), composed of Caf1-55, esc, E(z), Su(z)12, and possibly pho. PRC2 associates with the accessory components Jarid2 and jing to form the PRC2 Jarid2-jing variant (PRC2.2). PRC2 may also associate with Pcl and HDAC1/Rpd3 during early embryogenesis. This complex is distinct from the PRC1 complex, which contains many other PcG proteins like Pc, Ph, Psc, Su(z)2. The two complexes however cooperate and interact together during the first 3 hours of development to establish PcG silencing. Interacts with corto in vitro. Widely expressed.

It is found in the nucleus. In terms of biological role, polycomb group (PcG) protein. While PcG proteins are generally required to maintain the transcriptionally repressive state of homeotic genes throughout development, this protein is specifically required during the first 6 hours of embryogenesis to establish the repressed state. Component of the Esc/E(z) complex, which methylates 'Lys-9' and 'Lys-27' residues of histone H3, leading to transcriptional repression of the affected target gene. The Esc/E(z) complex is necessary but not sufficient for the repression of homeotic target genes, suggesting that the recruitment of the distinct PRC1 complex is also required. This Drosophila melanogaster (Fruit fly) protein is Polycomb protein esc (esc).